The sequence spans 140 residues: Sex-regulated protein janus-B (140 aa).

R42 contributes to the substrate binding site. H69 acts as the Proton acceptor in catalysis. 110–112 (SRT) contributes to the substrate binding site.

It belongs to the janus family.

JanA and janB regulate somatic sex differentiation. The protein is Sex-regulated protein janus-B (janB) of Drosophila yakuba (Fruit fly).